Here is a 341-residue protein sequence, read N- to C-terminus: N-acetyl-gamma-glutamyl-phosphate reductase (341 aa).

C147 is an active-site residue.

The protein belongs to the NAGSA dehydrogenase family. Type 1 subfamily.

The protein localises to the cytoplasm. The catalysed reaction is N-acetyl-L-glutamate 5-semialdehyde + phosphate + NADP(+) = N-acetyl-L-glutamyl 5-phosphate + NADPH + H(+). The protein operates within amino-acid biosynthesis; L-arginine biosynthesis; N(2)-acetyl-L-ornithine from L-glutamate: step 3/4. Functionally, catalyzes the NADPH-dependent reduction of N-acetyl-5-glutamyl phosphate to yield N-acetyl-L-glutamate 5-semialdehyde. This Staphylococcus epidermidis (strain ATCC 35984 / DSM 28319 / BCRC 17069 / CCUG 31568 / BM 3577 / RP62A) protein is N-acetyl-gamma-glutamyl-phosphate reductase.